Consider the following 377-residue polypeptide: UPF0754 membrane protein lwe2241 (377 aa).

Helical transmembrane passes span 1–21 (MSVLFTILLMAVIGGFIGAMT) and 357–377 (YLGGILGGFIGVIQGILAIWI).

This sequence belongs to the UPF0754 family.

It is found in the cell membrane. The polypeptide is UPF0754 membrane protein lwe2241 (Listeria welshimeri serovar 6b (strain ATCC 35897 / DSM 20650 / CCUG 15529 / CIP 8149 / NCTC 11857 / SLCC 5334 / V8)).